Here is a 617-residue protein sequence, read N- to C-terminus: Arrestin domain-containing protein B (617 aa).

Residues 1–109 (MDNRGLRLFI…ATFGQTDKWL (109 aa)) enclose the C2 domain. Positions 20, 27, 76, 78, and 84 each coordinate Ca(2+).

This sequence belongs to the arrestin family. Ca(2+) serves as cofactor.

This Dictyostelium discoideum (Social amoeba) protein is Arrestin domain-containing protein B (adcB).